The following is a 313-amino-acid chain: uncharacterized protein (313 aa).

Helical transmembrane passes span 41 to 61 (LAGT…GLMV), 68 to 88 (VHSV…FHYF), and 102 to 122 (QLLL…KLVL).

It belongs to the cytochrome b family.

Its subcellular location is the mitochondrion membrane. This is an uncharacterized protein from Arabidopsis thaliana (Mouse-ear cress).